The chain runs to 190 residues: QTIGPGTGYSNGYYYSYWNDGHAGVTYTNGGGGSFTVNWSNSGNFVAGKGWQPGTKNKVINFSGSYNPNGNSYLSIYGWSRNPLIEYYIVENFGTYNPSTGATKLGEVTSDGSVYDIYRTQRVNQPSIIGTATFYQYWSVRRNHRSSGSVNTANHFNAWASHGLTLGTMDYQIVAVEGYFSSGSASITVS.

The 190-residue stretch at 1 to 190 (QTIGPGTGYS…SSGSASITVS (190 aa)) folds into the GH11 domain. Residue Glu86 is the Nucleophile of the active site. Glu177 functions as the Proton donor in the catalytic mechanism.

Belongs to the glycosyl hydrolase 11 (cellulase G) family.

The enzyme catalyses Endohydrolysis of (1-&gt;4)-beta-D-xylosidic linkages in xylans.. Its pathway is glycan degradation; xylan degradation. This Trichoderma harzianum (Hypocrea lixii) protein is Endo-1,4-beta-xylanase.